Here is a 197-residue protein sequence, read N- to C-terminus: Surfactant protein C (197 aa).

Residues 1–23 constitute a propeptide that is removed on maturation; that stretch reads MDVGSKEVLMESPPDYSAAPRGR. 2 S-palmitoyl cysteine lipidation sites follow: Cys-28 and Cys-29. A propeptide spanning residues 59–197 is cleaved from the precursor; that stretch reads HMSQKHTEMV…LCGEVPLYYI (139 aa). Residues 94 to 197 enclose the BRICHOS domain; that stretch reads FSIGSTGLVV…LCGEVPLYYI (104 aa). 2 cysteine pairs are disulfide-bonded: Cys-120/Cys-148 and Cys-121/Cys-189.

It is found in the secreted. The protein resides in the extracellular space. It localises to the surface film. Pulmonary surfactant associated proteins promote alveolar stability by lowering the surface tension at the air-liquid interface in the peripheral air spaces. The chain is Surfactant protein C from Homo sapiens (Human).